A 69-amino-acid chain; its full sequence is Putative membrane protein insertion efficiency factor (69 aa).

Belongs to the UPF0161 family.

The protein resides in the cell membrane. Its function is as follows. Could be involved in insertion of integral membrane proteins into the membrane. The protein is Putative membrane protein insertion efficiency factor of Caldanaerobacter subterraneus subsp. tengcongensis (strain DSM 15242 / JCM 11007 / NBRC 100824 / MB4) (Thermoanaerobacter tengcongensis).